Here is a 434-residue protein sequence, read N- to C-terminus: RNA-binding protein SRO9 (434 aa).

Residues 1–13 (MSAETAAANTATA) are compositionally biased toward low complexity. The segment at 1–243 (MSAETAAANT…FHHNQQHPQQ (243 aa)) is disordered. Polar residues predominate over residues 26 to 41 (SKQVNLTPAPLPTSSP). At S55 the chain carries Phosphoserine. The segment covering 93-124 (KRSGSKNGASNGNSNKSKNNKTAASSTSSSNA) has biased composition (low complexity). A compositionally biased stretch (basic residues) spans 125–140 (NRKKKHHQHNAKKQQQ). S148 is modified (phosphoserine). Residue K156 forms a Glycyl lysine isopeptide (Lys-Gly) (interchain with G-Cter in ubiquitin) linkage. Residues 158-167 (ATSQENGQST) show a composition bias toward polar residues. A compositionally biased stretch (basic residues) spans 173-195 (PHHRNHHHSHHHNSNGPQRRKFH). The span at 196-208 (NSNNAGMPQNQGF) shows a compositional bias: polar residues. The span at 218 to 227 (RNARNNNNNR) shows a compositional bias: low complexity. The segment covering 228 to 238 (SKYHNHFHHNQ) has biased composition (basic residues). One can recognise an HTH La-type RNA-binding domain in the interval 255 to 351 (VQPVLMAINN…KEGDNVTGEA (97 aa)). Glycyl lysine isopeptide (Lys-Gly) (interchain with G-Cter in ubiquitin) cross-links involve residues K301, K342, and K352. Residues 396 to 434 (SLPPVPQQEEESSTELASQEQETKEDSAPVAAGESESSL) are disordered. S422 is modified (phosphoserine).

In terms of assembly, interacts with HAP1. Component of the HMC including HAP1, SRO9 and YDJ1.

The protein resides in the cytoplasm. Its function is as follows. May overlap in function with tropomyosin and may be involved in organization of actin filaments. Acts as a multicopy suppressor of RHO3 mutation. RNA-binding protein which may modulate mRNA translation. Involved in heme regulation of HAP1, as a component of the high-molecular-weight complex (HMC). This chain is RNA-binding protein SRO9 (SRO9), found in Saccharomyces cerevisiae (strain ATCC 204508 / S288c) (Baker's yeast).